Consider the following 549-residue polypeptide: Eukaryotic translation initiation factor 4B2 (549 aa).

2 disordered regions span residues 1–446 (MSKP…DLIR) and 465–549 (FRPR…REGW). Positions 24-46 (AEATATAADSQSFPSLKEAATAK) are enriched in low complexity. Gly residues-rich tracts occupy residues 96 to 109 (RLGGGFSSYGGGRS) and 126 to 136 (SWGGGGGGRRS). The short motif at 169–176 (GKKSLPSF) is the Nuclear localization signal 1 element. The segment covering 184 to 218 (RYGGGGGSFGGGGGGGAGSYGGGGAGAGSGGGGGF) has biased composition (gly residues). The short motif at 234–241 (SSTFGSGF) is the Nuclear localization signal 2 element. A compositionally biased stretch (basic and acidic residues) spans 263 to 278 (QEERRRLVFEPRKADT). Residues 281-292 (SETPTAVKTSKP) are compositionally biased toward polar residues. Over residues 299 to 323 (RPREQVLAEKGLDWKKLDSDIEAKK) the composition is skewed to basic and acidic residues. The span at 327-349 (SRPSSAQSSRPSSAQSNRSESSA) shows a compositional bias: low complexity. 3 stretches are compositionally biased toward basic and acidic residues: residues 369-431 (AKPR…KESQ), 485-507 (ERPHSRAGSIDESRSVESMERPR), and 518-549 (PVDDRRNFQGSKERGFFNNRNFDRSSSAREGW).

Belongs to the eIF-4 subunit B family. In terms of assembly, homodimer. Nonspherical monomer. mRNA-discriminating component of initiation complexes. In terms of processing, phosphorylated.

It is found in the nucleus. Functionally, promotes the eIF4F and eIF4A RNA-dependent ATP-hydrolysis activity with different efficiency depending on mRNAs, thus providing mRNA discrimination during initiation of translation. This Arabidopsis thaliana (Mouse-ear cress) protein is Eukaryotic translation initiation factor 4B2.